A 49-amino-acid polypeptide reads, in one-letter code: Defensin Tm-AMP-D1.2 (49 aa).

Disulfide bonds link Cys3-Cys49, Cys14-Cys34, Cys20-Cys43, and Cys24-Cys45.

Plant defense peptide. The chain is Defensin Tm-AMP-D1.2 from Triticum monococcum (Einkorn wheat).